The chain runs to 128 residues: Protein ripply2 (128 aa).

The segment at 1–63 (MENAGGAEGT…HAAEAMPDGP (63 aa)) is disordered. A compositionally biased stretch (low complexity) spans 9 to 22 (GTESGAAACAATDG). Residues 37 to 40 (WRPW) carry the WRPW motif motif. The tract at residues 77 to 112 (HPVRLFWPKSKCYDYLYQEAEALLKNFPIQATISFY) is ripply homology domain.

It belongs to the ripply family.

It localises to the nucleus. Plays a role in somitogenesis. Required for somite segregation and establishment of rostrocaudal polarity in somites. This is Protein ripply2 (RIPPLY2) from Homo sapiens (Human).